The chain runs to 367 residues: S-adenosylmethionine:tRNA ribosyltransferase-isomerase (367 aa).

Belongs to the QueA family. As to quaternary structure, monomer.

The protein localises to the cytoplasm. It carries out the reaction 7-aminomethyl-7-carbaguanosine(34) in tRNA + S-adenosyl-L-methionine = epoxyqueuosine(34) in tRNA + adenine + L-methionine + 2 H(+). The protein operates within tRNA modification; tRNA-queuosine biosynthesis. In terms of biological role, transfers and isomerizes the ribose moiety from AdoMet to the 7-aminomethyl group of 7-deazaguanine (preQ1-tRNA) to give epoxyqueuosine (oQ-tRNA). In Beijerinckia indica subsp. indica (strain ATCC 9039 / DSM 1715 / NCIMB 8712), this protein is S-adenosylmethionine:tRNA ribosyltransferase-isomerase.